The chain runs to 698 residues: Polyphosphate kinase 1 (698 aa).

Asn46 provides a ligand contact to ATP. Arg377 and Arg407 together coordinate Mg(2+). The active-site Phosphohistidine intermediate is the His437. Residues Tyr470, Arg566, and His594 each coordinate ATP.

It belongs to the polyphosphate kinase 1 (PPK1) family. Mg(2+) serves as cofactor. In terms of processing, an intermediate of this reaction is the autophosphorylated ppk in which a phosphate is covalently linked to a histidine residue through a N-P bond.

It carries out the reaction [phosphate](n) + ATP = [phosphate](n+1) + ADP. Functionally, catalyzes the reversible transfer of the terminal phosphate of ATP to form a long-chain polyphosphate (polyP). In Chlorobaculum tepidum (strain ATCC 49652 / DSM 12025 / NBRC 103806 / TLS) (Chlorobium tepidum), this protein is Polyphosphate kinase 1.